Reading from the N-terminus, the 559-residue chain is CRISPR-associated exonuclease Cas4/endonuclease Cas1 fusion (559 aa).

The interval Met1–Pro198 is CRISPR-associated exonuclease Cas4. Cys22 is a binding site for [4Fe-4S] cluster. Residues Asp87 and Asp100 each contribute to the Mn(2+) site. The [4Fe-4S] cluster site is built by Cys187, Cys190, and Cys196. A CRISPR-associated endonuclease Cas1 region spans residues Leu224–Arg559. Residues Glu380, His451, and Glu466 each coordinate Mn(2+).

This sequence in the N-terminal section; belongs to the CRISPR-associated exonuclease Cas4 family. It in the C-terminal section; belongs to the CRISPR-associated endonuclease Cas1 family. Homodimer, forms a heterotetramer with a Cas2 homodimer. [4Fe-4S] cluster serves as cofactor. Mg(2+) is required as a cofactor. Requires Mn(2+) as cofactor.

The enzyme catalyses exonucleolytic cleavage in the 5'- to 3'-direction to yield nucleoside 3'-phosphates.. CRISPR (clustered regularly interspaced short palindromic repeat), is an adaptive immune system that provides protection against mobile genetic elements (viruses, transposable elements and conjugative plasmids). CRISPR clusters contain spacers, sequences complementary to antecedent mobile elements, and target invading nucleic acids. CRISPR clusters are transcribed and processed into CRISPR RNA (crRNA). The Cas4 region acts as a ssDNA exonuclease, while the Cas1 region acts as a dsDNA endonuclease. Involved in the integration of spacer DNA into the CRISPR cassette. This Geobacter sulfurreducens (strain ATCC 51573 / DSM 12127 / PCA) protein is CRISPR-associated exonuclease Cas4/endonuclease Cas1 fusion (cas4-cas1).